The primary structure comprises 467 residues: Fumarate hydratase class II (467 aa).

Residues 98 to 100 (SGT), arginine 126, 129 to 132 (HPND), 139 to 141 (SSN), and threonine 187 contribute to the substrate site. Histidine 188 functions as the Proton donor/acceptor in the catalytic mechanism. Serine 318 is a catalytic residue. Substrate-binding positions include serine 319 and 324 to 326 (KVN).

The protein belongs to the class-II fumarase/aspartase family. Fumarase subfamily. In terms of assembly, homotetramer.

Its subcellular location is the cytoplasm. The enzyme catalyses (S)-malate = fumarate + H2O. Its pathway is carbohydrate metabolism; tricarboxylic acid cycle; (S)-malate from fumarate: step 1/1. In terms of biological role, involved in the TCA cycle. Catalyzes the stereospecific interconversion of fumarate to L-malate. The sequence is that of Fumarate hydratase class II from Salmonella typhimurium (strain LT2 / SGSC1412 / ATCC 700720).